A 100-amino-acid polypeptide reads, in one-letter code: Small ribosomal subunit protein uS14 (100 aa).

Belongs to the universal ribosomal protein uS14 family. As to quaternary structure, part of the 30S ribosomal subunit. Contacts proteins S3 and S10.

Its function is as follows. Binds 16S rRNA, required for the assembly of 30S particles and may also be responsible for determining the conformation of the 16S rRNA at the A site. The sequence is that of Small ribosomal subunit protein uS14 from Prochlorococcus marinus (strain MIT 9301).